The sequence spans 174 residues: MASTTFSSAFSILSLPSSSPSPPPWAPRTLPVANRRRRAAAVASTVTESPKVLELGDAIAGLTLEEARNLVDHLQERLCVSAASFPPAAAGLRAAAVEEAPVEQTEFDVVIEEVPSSARIATIKIVRALTNLALKEAKDLIEGLPKKLKEAVSKDEAEEAKKQLEGVGAKVSIA.

Residues 1-45 (MASTTFSSAFSILSLPSSSPSPPPWAPRTLPVANRRRRAAAVAST) constitute a chloroplast transit peptide.

Belongs to the bacterial ribosomal protein bL12 family.

The protein localises to the plastid. Its subcellular location is the chloroplast. In Secale cereale (Rye), this protein is Large ribosomal subunit protein bL12cy (RPL12-2).